The sequence spans 231 residues: Phosphatidylserine decarboxylase proenzyme (231 aa).

Serine 200 (schiff-base intermediate with substrate; via pyruvic acid) is an active-site residue. The residue at position 200 (serine 200) is a Pyruvic acid (Ser); by autocatalysis.

The protein belongs to the phosphatidylserine decarboxylase family. PSD-A subfamily. As to quaternary structure, heterodimer of a large membrane-associated beta subunit and a small pyruvoyl-containing alpha subunit. Pyruvate is required as a cofactor. Post-translationally, is synthesized initially as an inactive proenzyme. Formation of the active enzyme involves a self-maturation process in which the active site pyruvoyl group is generated from an internal serine residue via an autocatalytic post-translational modification. Two non-identical subunits are generated from the proenzyme in this reaction, and the pyruvate is formed at the N-terminus of the alpha chain, which is derived from the carboxyl end of the proenzyme. The post-translation cleavage follows an unusual pathway, termed non-hydrolytic serinolysis, in which the side chain hydroxyl group of the serine supplies its oxygen atom to form the C-terminus of the beta chain, while the remainder of the serine residue undergoes an oxidative deamination to produce ammonia and the pyruvoyl prosthetic group on the alpha chain.

It localises to the cell membrane. The catalysed reaction is a 1,2-diacyl-sn-glycero-3-phospho-L-serine + H(+) = a 1,2-diacyl-sn-glycero-3-phosphoethanolamine + CO2. It functions in the pathway phospholipid metabolism; phosphatidylethanolamine biosynthesis; phosphatidylethanolamine from CDP-diacylglycerol: step 2/2. Functionally, catalyzes the formation of phosphatidylethanolamine (PtdEtn) from phosphatidylserine (PtdSer). The sequence is that of Phosphatidylserine decarboxylase proenzyme from Mycobacterium tuberculosis (strain ATCC 25177 / H37Ra).